We begin with the raw amino-acid sequence, 234 residues long: NAD-dependent protein deacylase (234 aa).

Positions 1-234 constitute a Deacetylase sirtuin-type domain; that stretch reads MKNLVVLTGA…ELKQLLIPAP (234 aa). Residue 9–28 participates in NAD(+) binding; that stretch reads GAGMSAESGISTFRDAGGLW. Residues Y53 and R56 each contribute to the substrate site. 86 to 89 is a binding site for NAD(+); the sequence is QNVD. The active-site Proton acceptor is the H104. 175 to 177 serves as a coordination point for NAD(+); the sequence is GTS.

It belongs to the sirtuin family. Class III subfamily.

The protein localises to the cytoplasm. It carries out the reaction N(6)-acetyl-L-lysyl-[protein] + NAD(+) + H2O = 2''-O-acetyl-ADP-D-ribose + nicotinamide + L-lysyl-[protein]. The enzyme catalyses N(6)-succinyl-L-lysyl-[protein] + NAD(+) + H2O = 2''-O-succinyl-ADP-D-ribose + nicotinamide + L-lysyl-[protein]. Its function is as follows. NAD-dependent lysine deacetylase and desuccinylase that specifically removes acetyl and succinyl groups on target proteins. Modulates the activities of several proteins which are inactive in their acylated form. This chain is NAD-dependent protein deacylase, found in Bacteroides thetaiotaomicron (strain ATCC 29148 / DSM 2079 / JCM 5827 / CCUG 10774 / NCTC 10582 / VPI-5482 / E50).